The primary structure comprises 415 residues: Tyrosine--tRNA ligase (415 aa).

Tyr34 lines the L-tyrosine pocket. The short motif at 39 to 48 (PTADSLHLGH) is the 'HIGH' region element. Residues Tyr164 and Gln168 each coordinate L-tyrosine. A 'KMSKS' region motif is present at residues 226–230 (KFGKS). Lys229 provides a ligand contact to ATP. Positions 348–415 (KNIVDFLVDG…KKKYFLGKIK (68 aa)) constitute an S4 RNA-binding domain.

It belongs to the class-I aminoacyl-tRNA synthetase family. TyrS type 1 subfamily. Homodimer.

It is found in the cytoplasm. The enzyme catalyses tRNA(Tyr) + L-tyrosine + ATP = L-tyrosyl-tRNA(Tyr) + AMP + diphosphate + H(+). In terms of biological role, catalyzes the attachment of tyrosine to tRNA(Tyr) in a two-step reaction: tyrosine is first activated by ATP to form Tyr-AMP and then transferred to the acceptor end of tRNA(Tyr). The protein is Tyrosine--tRNA ligase of Leuconostoc citreum (strain KM20).